The sequence spans 310 residues: MVGFRAGDVPPTATVKFIGAGTAACIADLFTFPLDTAKVRLQIQGENKASTNMGRGPVKYRGVFGTISTMVRVEGPRSLYSGLVAGLQRQMSFASVRIGLYDSVKQFYTKGSDHAGIGSRLMAGCTTGAMAVAVAQPTDVLKVRFQAQVSAGASKRYHSTMDAYRTIAKEEGFRGLWKGTGPNITRNAIVNCTELVTYDLIKDALLKSSLMTDDLPCHFTSAFGAGFCTTIIASPVDVVKTRYMNSAQGQYSSALNCAVAMLTKKGPKAFFKGFMPSFLRLGSWNVVMFVTYEQLKRAMMAARQNWHTPL.

Over 1 to 10 the chain is Mitochondrial intermembrane; the sequence is MVGFRAGDVP. Residues 11 to 32 form a helical membrane-spanning segment; sequence PTATVKFIGAGTAACIADLFTF. 3 Solcar repeats span residues 11–107, 115–204, and 213–298; these read PTAT…VKQF, AGIG…IKDA, and DDLP…LKRA. The Mitochondrial matrix portion of the chain corresponds to 33–78; it reads PLDTAKVRLQIQGENKASTNMGRGPVKYRGVFGTISTMVRVEGPRS. A helical transmembrane segment spans residues 79-101; it reads LYSGLVAGLQRQMSFASVRIGLY. Residues 102–120 are Mitochondrial intermembrane-facing; the sequence is DSVKQFYTKGSDHAGIGSR. The chain crosses the membrane as a helical span at residues 121–137; the sequence is LMAGCTTGAMAVAVAQP. At 138-181 the chain is on the mitochondrial matrix side; the sequence is TDVLKVRFQAQVSAGASKRYHSTMDAYRTIAKEEGFRGLWKGTG. Residues 182–198 traverse the membrane as a helical segment; the sequence is PNITRNAIVNCTELVTY. Residues 199–215 are Mitochondrial intermembrane-facing; sequence DLIKDALLKSSLMTDDL. A helical transmembrane segment spans residues 216 to 235; that stretch reads PCHFTSAFGAGFCTTIIASP. At 236-269 the chain is on the mitochondrial matrix side; the sequence is VDVVKTRYMNSAQGQYSSALNCAVAMLTKKGPKA. A helical membrane pass occupies residues 270–292; it reads FFKGFMPSFLRLGSWNVVMFVTY. Residues 277-299 are purine nucleotide binding; it reads SFLRLGSWNVVMFVTYEQLKRAM. Residues 293 to 310 are Mitochondrial intermembrane-facing; that stretch reads EQLKRAMMAARQNWHTPL.

This sequence belongs to the mitochondrial carrier (TC 2.A.29) family. Homotetramer. Adopts an asymmetrical dimer of dimers functional form.

It localises to the mitochondrion inner membrane. It carries out the reaction L-aspartate(out) + phosphate(in) + H(+)(in) = L-aspartate(in) + phosphate(out) + H(+)(out). The enzyme catalyses oxaloacetate(out) + phosphate(in) + H(+)(in) = oxaloacetate(in) + phosphate(out) + H(+)(out). It catalyses the reaction (S)-malate(out) + phosphate(in) + H(+)(in) = (S)-malate(in) + phosphate(out) + H(+)(out). The catalysed reaction is malonate(out) + phosphate(in) + H(+)(in) = malonate(in) + phosphate(out) + H(+)(out). It carries out the reaction sulfate(out) + phosphate(in) + H(+)(in) = sulfate(in) + phosphate(out) + H(+)(out). The enzyme catalyses (S)-malate(out) = (S)-malate(in). It catalyses the reaction L-aspartate(out) = L-aspartate(in). The catalysed reaction is phosphate(in) = phosphate(out). It carries out the reaction chloride(in) = chloride(out). The enzyme catalyses H(+)(in) = H(+)(out). It catalyses the reaction a long-chain fatty acid(out) = a long-chain fatty acid(in). In terms of biological role, UCP are mitochondrial transporter proteins that create proton leaks across the inner mitochondrial membrane, thus uncoupling oxidative phosphorylation from ATP synthesis. As a result, energy is dissipated in the form of heat. Its function is as follows. Antiporter that exports dicarboxylate intermediates of the Krebs cycle in exchange for phosphate plus a proton across the inner membrane of mitochondria, a process driven by mitochondrial motive force with an overall impact on glycolysis, glutaminolysis and glutathione-dependent redox balance. Continuous export of oxaloacetate and related four-carbon dicarboxylates from mitochondrial matrix into the cytosol negatively regulates the oxidation of acetyl-CoA substrates via the Krebs cycle, lowering the ATP/ADP ratio and reactive oxygen species (ROS) production. May mediate inducible proton entry into the mitochondrial matrix affecting ATP turnover as a protection mechanism against oxidative stress. The proton currents are most likely associated with fatty acid flipping across the inner membrane of mitochondria in a metabolic process regulated by free fatty acids and purine nucleotides. The sequence is that of Dicarboxylate carrier UCP2 (ucp2) from Danio rerio (Zebrafish).